The following is a 244-amino-acid chain: Putative lipoprotein LprA (244 aa).

Positions 1 to 24 (MKHPPCSVVAAATAILAVVLAIGG) are cleaved as a signal peptide. Cysteine 25 carries N-palmitoyl cysteine lipidation. Cysteine 25 is lipidated: S-diacylglycerol cysteine.

It belongs to the LppX/LprAFG lipoprotein family.

It localises to the cell membrane. This is Putative lipoprotein LprA (lprA) from Mycobacterium tuberculosis (strain CDC 1551 / Oshkosh).